An 838-amino-acid chain; its full sequence is Extragenic suppressor of kinetochore protein 1 (838 aa).

2 positions are modified to phosphoserine: S411 and S418. Residues 411–468 (SDEDDDDSTFSDKNSKDFKETEDMNGAEDMHGRAPQITKDNLNLTTTDSPMSEAEPVS) form a disordered region. Phosphothreonine is present on T419. The span at 423 to 442 (KNSKDFKETEDMNGAEDMHG) shows a compositional bias: basic and acidic residues. Residues S425, S459, S468, and S491 each carry the phosphoserine modification. Residues 448–460 (TKDNLNLTTTDSP) are compositionally biased toward polar residues. T493 bears the Phosphothreonine mark. At S494 the chain carries Phosphoserine. Residues 690 to 700 (ELESNSSDDDV) show a composition bias toward acidic residues. Disordered stretches follow at residues 690–745 (ELES…DQDN) and 757–838 (ISDN…NHGK). Phosphoserine is present on residues S711 and S713. Residues 714–723 (NDEDDGNDED) show a composition bias toward acidic residues. The segment covering 724–734 (PLSREMSRRLS) has biased composition (basic and acidic residues). Composition is skewed to acidic residues over residues 768–779 (SDEDDDDDDEVV) and 806–818 (SDSE…DSSD).

The protein belongs to the SAPS family. As to quaternary structure, interacts with ppe1 and mis12.

It is found in the nucleus. Functionally, has a role in chromosome segregation. May provide a dynamic connection between kinetochore microtubules and kinetochore chromatin. In Schizosaccharomyces pombe (strain 972 / ATCC 24843) (Fission yeast), this protein is Extragenic suppressor of kinetochore protein 1 (ekc1).